A 1104-amino-acid polypeptide reads, in one-letter code: MPRRQDIQKILLLGSGPIVIGQACEFDYSGTQACKALREEGYEVVLVNSNPATIMTDPETADRTYIEPLTPELVEKVIARERPDALLPTMGGQTALNIAVALAKNGVLDQYNVELIGAKLPAIEKAEDRKLFNEAMDKIGVKVCPSGTASSLDESKAIARRIGTYPLIIRPAFTMGGTGGGIAYNQEEFEEMAQVGIDASPVSQILIDQSLLGWKEYELEVMRDLADNVVIICSIENIDPMGIHTGDSITVAPAQTLTDKEYQRLRDMAIKIIREIGVETGGSNIQFAVNPVNGDVVVIEMNPRVSRSSALSSKATGFPIAKMAAKLAVGYTLDEIRNDITKKTPASFEPTIDYVVTKVPRFAFEKFPGSEPVLTTQMKSVGEAMAIGRTFNESFQKALRSLETGRAGWGCDKAEKLPSGEQIRAQLRTPNPDRIFAVRHALQLGMSPEEIYELTAIDPWFLDKMQQLLEVEKFLKRTPLKQLTREQMYAVKRDGYSDRQIAFATKTTEDEVRAYRKELGVTPVYKTVDTCAAEFEAFTPYYYSTYEEETEVIPASKPKVMILGGGPNRIGQGIEFDYCCCHAAYALKGAGYETIMVNSNPETVSTDYDTSDRLYFEPLTKEDVLNIIEAENPVGIIVQFGGQTPLKLALPLQDYLRQVGNGSLVIGNGNEETAITDDQLPITKIWGTSPDSIDSAEDRERFEKILQKLNISQPPNGIARSYEDALIVAKRIGYPVVVRPSYVLGGRAMEIVYSDTELERYMTFAVQVEPEHPILIDKFLENAIEVDVDAIADHTGRVVIGGIMEHIEQAGIHSGDSACSLPSISLPPAVLNQIRTWTVQLAQELSVVGLMNIQFAVIGASSYSPQVYILEANPRASRTVPFVSKATGVPLAKLASLIMSGKTLEELNFTQEVIPSHIAVKEAVLPFNKFPGTDTILGPEMRSTGEVMGIDSDFGRAFAKAELGAGERLPLTGTVFVSMSDRDKSAAVPVVREFIDLGFKVMATFGTRRVLLENGLNVELVLKLHEGRPHVIDAIKNQKIQLIINTPSGEEAQTDARLIRRTGLAYKIPIITTIAGAKATVAAIRSMQNTTLDVKTIQEYCPNF.

A carboxyphosphate synthetic domain region spans residues 1–403 (MPRRQDIQKI…SFQKALRSLE (403 aa)). 12 residues coordinate ATP: Arg-129, Arg-170, Gly-176, Gly-177, Gln-209, Leu-211, Glu-216, Gly-242, Ile-243, His-244, Gln-286, and Glu-300. The ATP-grasp 1 domain occupies 133-329 (NEAMDKIGVK…IAKMAAKLAV (197 aa)). Residues Gln-286, Glu-300, and Asn-302 each coordinate Mg(2+). Residues Gln-286, Glu-300, and Asn-302 each contribute to the Mn(2+) site. An oligomerization domain region spans residues 404 to 552 (TGRAGWGCDK…YSTYEEETEV (149 aa)). The interval 553 to 966 (IPASKPKVMI…AFAKAELGAG (414 aa)) is carbamoyl phosphate synthetic domain. The region spanning 703–900 (EKILQKLNIS…LAKLASLIMS (198 aa)) is the ATP-grasp 2 domain. 10 residues coordinate ATP: Arg-739, Lys-778, Leu-780, Glu-785, Gly-811, Ile-812, His-813, Ser-814, Gln-854, and Glu-871. Residues Gln-854, Glu-871, and Asn-873 each coordinate Mg(2+). The Mn(2+) site is built by Gln-854, Glu-871, and Asn-873. Residues 967–1104 (ERLPLTGTVF…KTIQEYCPNF (138 aa)) form the MGS-like domain. The segment at 967 to 1104 (ERLPLTGTVF…KTIQEYCPNF (138 aa)) is allosteric domain.

The protein belongs to the CarB family. In terms of assembly, composed of two chains; the small (or glutamine) chain promotes the hydrolysis of glutamine to ammonia, which is used by the large (or ammonia) chain to synthesize carbamoyl phosphate. Tetramer of heterodimers (alpha,beta)4. It depends on Mg(2+) as a cofactor. Requires Mn(2+) as cofactor.

The catalysed reaction is hydrogencarbonate + L-glutamine + 2 ATP + H2O = carbamoyl phosphate + L-glutamate + 2 ADP + phosphate + 2 H(+). It catalyses the reaction hydrogencarbonate + NH4(+) + 2 ATP = carbamoyl phosphate + 2 ADP + phosphate + 2 H(+). It participates in amino-acid biosynthesis; L-arginine biosynthesis; carbamoyl phosphate from bicarbonate: step 1/1. Its pathway is pyrimidine metabolism; UMP biosynthesis via de novo pathway; (S)-dihydroorotate from bicarbonate: step 1/3. Its function is as follows. Large subunit of the glutamine-dependent carbamoyl phosphate synthetase (CPSase). CPSase catalyzes the formation of carbamoyl phosphate from the ammonia moiety of glutamine, carbonate, and phosphate donated by ATP, constituting the first step of 2 biosynthetic pathways, one leading to arginine and/or urea and the other to pyrimidine nucleotides. The large subunit (synthetase) binds the substrates ammonia (free or transferred from glutamine from the small subunit), hydrogencarbonate and ATP and carries out an ATP-coupled ligase reaction, activating hydrogencarbonate by forming carboxy phosphate which reacts with ammonia to form carbamoyl phosphate. The polypeptide is Carbamoyl phosphate synthase large chain (Nostoc sp. (strain PCC 7120 / SAG 25.82 / UTEX 2576)).